A 647-amino-acid chain; its full sequence is Golgi-associated RAB2B interactor protein 3 (647 aa).

Residues 188–202 (IPTADTSTETKSTLV) show a composition bias toward polar residues. 4 disordered regions span residues 188 to 220 (IPTA…TSQD), 267 to 296 (TAGA…GSAR), 361 to 384 (SKSP…QERS), and 465 to 573 (RDGS…GFVS). Over residues 205-214 (IHGEGDRDSK) the composition is skewed to basic and acidic residues. Polar residues predominate over residues 361–378 (SKSPGSGQVATGLTGTAS). Residue S378 is modified to Phosphoserine. Residues 478–491 (TQKEKRERRESDRK) are compositionally biased toward basic and acidic residues. Residues 492-501 (GSRKSSHHQR) show a composition bias toward basic residues. The Bipartite nuclear localization signal signature appears at 494–511 (RKSSHHQRTGASRHSSSK). The segment covering 528–556 (KTREDKKEKGRGSLRDQRHSSSYRSESRT) has biased composition (basic and acidic residues). 2 positions are modified to phosphoserine: S634 and S636.

Belongs to the GARIN family. As to quaternary structure, interacts (via N-terminus) with RAB2B (in GTP-bound form). Interacts with FRG1.

The protein resides in the golgi apparatus. It localises to the nucleus. The protein localises to the cajal body. May be involved in RNA biogenesis. This Rattus norvegicus (Rat) protein is Golgi-associated RAB2B interactor protein 3 (Garin3).